The chain runs to 1020 residues: 5'-3' exoribonuclease 3 (1020 aa).

A disordered region spans residues 113–144 (QQRSRRFRSAKDASDAAAEEERLREEFEREGR). Positions 121–144 (SAKDASDAAAEEERLREEFEREGR) are enriched in basic and acidic residues. Residues 262–279 (ERCFLCGQMGHFASNCEG) form a CCHC-type zinc finger. Disordered regions lie at residues 411-440 (QHQR…TVQP) and 452-483 (RLAS…PGSS). Over residues 414-433 (RQAERVKRDKAGKATKRMDD) the composition is skewed to basic and acidic residues. The stretch at 487–523 (AIVDVENSLESDERENKEELKTKLKELIREKSDAFNS) forms a coiled coil. Over residues 831-844 (NNHGMHNNHGMHNN) the composition is skewed to low complexity. 3 disordered regions span residues 831 to 859 (NNHG…GRHL), 875 to 897 (TDRY…PQYV), and 911 to 1020 (PGAQ…RHRY). 2 stretches are compositionally biased toward low complexity: residues 911 to 923 (PGAQ…APYQ) and 960 to 972 (GNHQ…QQWH). Residues 1000 to 1020 (RGRGRGSHHHHDQGGNPRHRY) are compositionally biased toward basic residues.

Belongs to the 5'-3' exonuclease family. XRN2/RAT1 subfamily. As to expression, expressed in roots, leaves, stems and flowers.

The protein localises to the nucleus. Possesses 5'-&gt;3' exoribonuclease activity. Acts as an endogenous post-transcriptional gene silencing (PTGS) suppressor. Degrades miRNA-derived loops, excised during miRNA maturation in the nucleus. Required for proper development. Involved in pre-rRNA processing. Involved with XRN2 in the 5'-end exonucleolytic processing of 5.8S and 25S rRNAs. Contributes with XRN2 to polyadenylation-dependent nuclear RNA surveillance. Involved in the degradation of aberrant polyadenylated pre-rRNA through 5'-end processing. The chain is 5'-3' exoribonuclease 3 from Arabidopsis thaliana (Mouse-ear cress).